A 261-amino-acid polypeptide reads, in one-letter code: Thioesterase frbD (261 aa).

Belongs to the AMT4 thioesterase family.

Its pathway is antifungal biosynthesis. In terms of biological role, thioesterase; part of the gene cluster that mediates the biosynthesis of the antifungal antibiotic FR901469, an inhibitor of beta-1,3-glucansynthase, exerting antifungal activity against the pathogenes Candida albicans and Aspergillus fumigatus. FR901469 is a cyclic depsipeptide containing 12 amino acid residues and a fatty acid chain. The NRPS frbI contains 12 modules responsible for the formation of the depsipeptide backbone which is denoted as Acyl-Thr-Ala-Tyr-Val-4OHPro-Thr-Thr-3OHPro-threo3OHGln-Gly-Thr-Orn-OH (C71H116N14O23). The PKS frbB is probably involved in the production of the hydrocarbon chain, and the acyl-CoA ligase frbC might be involved in the transport of the chain to the peptide ptoduct of frbI. Because FR901469 contains 3 hydroxylated amino acid residues, the 3 oxygenases frbA, frbH, and frbJ might be participating in amino acid hydroxylation. As no thioesterase domains were detected in frbI or frbB, the thioesterases frbD and frbE may instead release and cyclize the products of the NRPS and PKS, respectively. In Dothideomycetidae sp. (strain 11243) (Fungal sp. (strain No.11243)), this protein is Thioesterase frbD.